The primary structure comprises 992 residues: Vacuolar membrane protease (992 aa).

At methionine 1–threonine 24 the chain is on the cytoplasmic side. A helical membrane pass occupies residues phenylalanine 25–valine 45. The Vacuolar segment spans residues proline 46–threonine 390. 3 N-linked (GlcNAc...) asparagine glycosylation sites follow: asparagine 59, asparagine 115, and asparagine 118. Zn(2+)-binding residues include histidine 174 and aspartate 186. Residue glutamate 220 is the Proton acceptor of the active site. Glutamate 221 is a Zn(2+) binding site. Asparagine 237 is a glycosylation site (N-linked (GlcNAc...) asparagine). Residues glutamate 246 and histidine 319 each contribute to the Zn(2+) site. The helical transmembrane segment at leucine 391–isoleucine 411 threads the bilayer. The Cytoplasmic segment spans residues alanine 412–threonine 446. Residues proline 447–isoleucine 467 form a helical membrane-spanning segment. The Vacuolar portion of the chain corresponds to asparagine 468–serine 474. A helical membrane pass occupies residues serine 475 to alanine 495. The Cytoplasmic segment spans residues arginine 496–arginine 508. The chain crosses the membrane as a helical span at residues alanine 509–tyrosine 529. The Vacuolar portion of the chain corresponds to alanine 530–lysine 533. A helical transmembrane segment spans residues glycine 534–valine 554. At serine 555–tryptophan 671 the chain is on the cytoplasmic side. The tract at residues arginine 579–serine 620 is disordered. Residues isoleucine 672–leucine 692 form a helical membrane-spanning segment. Topologically, residues leucine 693 to phenylalanine 708 are vacuolar. A helical membrane pass occupies residues isoleucine 709–isoleucine 729. Residues histidine 730–valine 736 lie on the Cytoplasmic side of the membrane. A helical transmembrane segment spans residues proline 737–phenylalanine 757. Residues serine 758–glutamine 992 are Vacuolar-facing. N-linked (GlcNAc...) asparagine glycans are attached at residues asparagine 805, asparagine 846, and asparagine 954.

The protein belongs to the peptidase M28 family. Requires Zn(2+) as cofactor.

It is found in the vacuole membrane. May be involved in vacuolar sorting and osmoregulation. This chain is Vacuolar membrane protease, found in Paracoccidioides brasiliensis (strain Pb18).